Here is a 179-residue protein sequence, read N- to C-terminus: ATP synthase subunit delta (179 aa).

Belongs to the ATPase delta chain family. In terms of assembly, F-type ATPases have 2 components, F(1) - the catalytic core - and F(0) - the membrane proton channel. F(1) has five subunits: alpha(3), beta(3), gamma(1), delta(1), epsilon(1). F(0) has three main subunits: a(1), b(2) and c(10-14). The alpha and beta chains form an alternating ring which encloses part of the gamma chain. F(1) is attached to F(0) by a central stalk formed by the gamma and epsilon chains, while a peripheral stalk is formed by the delta and b chains.

It is found in the cell membrane. F(1)F(0) ATP synthase produces ATP from ADP in the presence of a proton or sodium gradient. F-type ATPases consist of two structural domains, F(1) containing the extramembraneous catalytic core and F(0) containing the membrane proton channel, linked together by a central stalk and a peripheral stalk. During catalysis, ATP synthesis in the catalytic domain of F(1) is coupled via a rotary mechanism of the central stalk subunits to proton translocation. In terms of biological role, this protein is part of the stalk that links CF(0) to CF(1). It either transmits conformational changes from CF(0) to CF(1) or is implicated in proton conduction. The chain is ATP synthase subunit delta from Clostridium beijerinckii (strain ATCC 51743 / NCIMB 8052) (Clostridium acetobutylicum).